The chain runs to 458 residues: MSTGKIIQVIGAVIDVEFARDNTPKVYDALNVVEAGLVLEVQQQIGDGVVRTIAMGSSDGLRRGMEVKNTNAPISVPVGHGTLGRIMNVLGEPIDEAGPIEYTEKRSIHQAPPAYDELALSTEILETGIKVVDLICPFAKGGKVGLFGGAGVGKTVTMMELINNIAKEHSGYSVFAGVGERTREGNDFYYEMKDSNVLDKVSLVYGQMNEPPGNRLRVALSGLTIAEGFRDEKRDVLMFIDNIYRYTLAGTEVSALLGRMPSAVGYQPTLAAEMGALQERITSTKTGSITSVQAVYVPADDLTDPSPATTFSHLDATIVLSRQIAELGIYPAVDPLDSTSRQLDPLVVGQDHYETARAVQKVLQRYKELKDIIAILGMDELSDEDKKIVDRARKIQRFLSQPFHVAEVFTGNPGKFVSLKDTVASFKAIVNGEYDHLPEQAFYMVGSIQEAIEKAKTL.

Residue 148–155 coordinates ATP; it reads GGAGVGKT.

It belongs to the ATPase alpha/beta chains family. As to quaternary structure, F-type ATPases have 2 components, CF(1) - the catalytic core - and CF(0) - the membrane proton channel. CF(1) has five subunits: alpha(3), beta(3), gamma(1), delta(1), epsilon(1). CF(0) has three main subunits: a(1), b(2) and c(9-12). The alpha and beta chains form an alternating ring which encloses part of the gamma chain. CF(1) is attached to CF(0) by a central stalk formed by the gamma and epsilon chains, while a peripheral stalk is formed by the delta and b chains.

The protein localises to the cell inner membrane. The enzyme catalyses ATP + H2O + 4 H(+)(in) = ADP + phosphate + 5 H(+)(out). Functionally, produces ATP from ADP in the presence of a proton gradient across the membrane. The catalytic sites are hosted primarily by the beta subunits. The sequence is that of ATP synthase subunit beta from Francisella tularensis subsp. tularensis (strain FSC 198).